A 283-amino-acid polypeptide reads, in one-letter code: Large ribosomal subunit protein mL46 (283 aa).

Position 217 is an N6-succinyllysine (lysine 217). Lysine 228 carries the post-translational modification N6-acetyllysine. Residue lysine 246 is modified to N6-succinyllysine.

Belongs to the mitochondrion-specific ribosomal protein mL46 family. As to quaternary structure, component of the mitochondrial ribosome large subunit (39S) which comprises a 16S rRNA and about 50 distinct proteins.

Its subcellular location is the mitochondrion. This is Large ribosomal subunit protein mL46 (Mrpl46) from Mus musculus (Mouse).